A 222-amino-acid chain; its full sequence is Ribose-5-phosphate isomerase A (222 aa).

Residues 29 to 32 (TGST), 82 to 85 (DSAD), and 95 to 98 (KGGG) each bind substrate. The active-site Proton acceptor is the E104. Substrate is bound at residue K122.

This sequence belongs to the ribose 5-phosphate isomerase family. In terms of assembly, homodimer.

The catalysed reaction is aldehydo-D-ribose 5-phosphate = D-ribulose 5-phosphate. Its pathway is carbohydrate degradation; pentose phosphate pathway; D-ribose 5-phosphate from D-ribulose 5-phosphate (non-oxidative stage): step 1/1. Catalyzes the reversible conversion of ribose-5-phosphate to ribulose 5-phosphate. The chain is Ribose-5-phosphate isomerase A from Blochmanniella floridana.